The sequence spans 955 residues: Leucine--tRNA ligase (955 aa).

Positions 66–77 (PYPSGSGLHVGH) match the 'HIGH' region motif. A 'KMSKS' region motif is present at residues 725–729 (KMGKS). K728 serves as a coordination point for ATP.

Belongs to the class-I aminoacyl-tRNA synthetase family.

It localises to the cytoplasm. The enzyme catalyses tRNA(Leu) + L-leucine + ATP = L-leucyl-tRNA(Leu) + AMP + diphosphate. The chain is Leucine--tRNA ligase from Saccharopolyspora erythraea (strain ATCC 11635 / DSM 40517 / JCM 4748 / NBRC 13426 / NCIMB 8594 / NRRL 2338).